The sequence spans 211 residues: 2,3-bisphosphoglycerate-dependent phosphoglycerate mutase (211 aa).

Substrate contacts are provided by residues 9–16, 22–23, Arg61, 88–91, Lys99, 115–116, and 159–160; these read RHGQSDWN, TG, ERDY, RR, and GN. The active-site Tele-phosphohistidine intermediate is His10. The active-site Proton donor/acceptor is the Glu88.

Belongs to the phosphoglycerate mutase family. BPG-dependent PGAM subfamily. Homodimer.

It carries out the reaction (2R)-2-phosphoglycerate = (2R)-3-phosphoglycerate. The protein operates within carbohydrate degradation; glycolysis; pyruvate from D-glyceraldehyde 3-phosphate: step 3/5. Catalyzes the interconversion of 2-phosphoglycerate and 3-phosphoglycerate. This is 2,3-bisphosphoglycerate-dependent phosphoglycerate mutase from Rhizobium johnstonii (strain DSM 114642 / LMG 32736 / 3841) (Rhizobium leguminosarum bv. viciae).